A 179-amino-acid polypeptide reads, in one-letter code: Inosine/xanthosine triphosphatase (179 aa).

Substrate is bound at residue 8–13 (TTNPAK). The Mg(2+) site is built by Asp-38 and Glu-68. 68–69 (EA) contributes to the substrate binding site.

This sequence belongs to the YjjX NTPase family. As to quaternary structure, homodimer. Mg(2+) is required as a cofactor. It depends on Mn(2+) as a cofactor.

The enzyme catalyses XTP + H2O = XDP + phosphate + H(+). It catalyses the reaction ITP + H2O = IDP + phosphate + H(+). Phosphatase that hydrolyzes non-canonical purine nucleotides such as XTP and ITP to their respective diphosphate derivatives. Probably excludes non-canonical purines from DNA/RNA precursor pool, thus preventing their incorporation into DNA/RNA and avoiding chromosomal lesions. The chain is Inosine/xanthosine triphosphatase from Pectobacterium carotovorum subsp. carotovorum (strain PC1).